We begin with the raw amino-acid sequence, 550 residues long: Glucose-6-phosphate isomerase (550 aa).

Catalysis depends on Glu356, which acts as the Proton donor. Active-site residues include His387 and Lys515.

The protein belongs to the GPI family.

It is found in the cytoplasm. It catalyses the reaction alpha-D-glucose 6-phosphate = beta-D-fructose 6-phosphate. Its pathway is carbohydrate biosynthesis; gluconeogenesis. It participates in carbohydrate degradation; glycolysis; D-glyceraldehyde 3-phosphate and glycerone phosphate from D-glucose: step 2/4. In terms of biological role, catalyzes the reversible isomerization of glucose-6-phosphate to fructose-6-phosphate. The chain is Glucose-6-phosphate isomerase from Vibrio campbellii (strain ATCC BAA-1116).